A 425-amino-acid chain; its full sequence is Apolipoprotein N-acyltransferase (425 aa).

Transmembrane regions (helical) follow at residues 12–32 (LLAC…AYAI), 34–54 (NPYI…LAFL), 60–80 (SAFA…ALSF), 88–108 (LLPL…YLLL), 120–140 (FLGS…DSFF), and 142–162 (YSVF…CIFL). The CN hydrolase domain occupies 201 to 425 (VSTKTPQDLK…LGDILFRKRS (225 aa)). Glutamate 242 serves as the catalytic Proton acceptor. Lysine 296 is an active-site residue. The Nucleophile role is filled by cysteine 349.

Belongs to the CN hydrolase family. Apolipoprotein N-acyltransferase subfamily.

It localises to the cell inner membrane. The enzyme catalyses N-terminal S-1,2-diacyl-sn-glyceryl-L-cysteinyl-[lipoprotein] + a glycerophospholipid = N-acyl-S-1,2-diacyl-sn-glyceryl-L-cysteinyl-[lipoprotein] + a 2-acyl-sn-glycero-3-phospholipid + H(+). Its pathway is protein modification; lipoprotein biosynthesis (N-acyl transfer). Its function is as follows. Catalyzes the phospholipid dependent N-acylation of the N-terminal cysteine of apolipoprotein, the last step in lipoprotein maturation. This is Apolipoprotein N-acyltransferase from Helicobacter pylori (strain ATCC 700392 / 26695) (Campylobacter pylori).